The sequence spans 602 residues: Aryl hydrocarbon receptor protein 1 (602 aa).

A propeptide spanning residues 1-2 (MY) is cleaved from the precursor. Over residues 1 to 12 (MYASKRRQRNFK) the composition is skewed to basic residues. Positions 1–28 (MYASKRRQRNFKRVRDPPKQLTNTNPSK) are disordered. 2 short sequence motifs (nuclear localization signal) span residues 5 to 8 (KRRQ) and 28 to 33 (KRHRER). Residues 18–71 (PKQLTNTNPSKRHRERLNGELETVAMLLPYDSSTISRLDKLSVLRLAVSFLQCK) form the bHLH domain. Required for maintaining the overall integrity of the AHR:ARNT heterodimer and its transcriptional activity stretches follow at residues 41–73 (VAML…CKAH), 133–141 (SLKSLGGFI), and 266–268 (ICV). The Nuclear export signal motif lies at 55-63 (LDKLSVLRL). The region spanning 126 to 196 (ESNFEEISLK…QQLDSNFHIP (71 aa)) is the PAS domain. Positions 440–467 (STSNSLFPSVPVPTPTTTKANRRRKENS) are disordered.

As to quaternary structure, interacts with daf-21/hsp90. Interacts with aha-1. As to expression, expressed in many distinct neuronal cells including RMED, RMEV, RMEL and RMER. Functions in URX neurons to promote aggregation behavior.

It localises to the nucleus. Its function is as follows. Probable ligand-activated transcriptional activator. Acts as a transcriptional regulator in GABAergic motor neuron cell fate specification and development. Promotes cell-type-specific expression of guanylate cyclase genes that have key roles in aggregation behavior and hyperoxia avoidance. Has no role in carbon dioxide avoidance. This is Aryl hydrocarbon receptor protein 1 from Caenorhabditis elegans.